A 163-amino-acid polypeptide reads, in one-letter code: Halocyanin (163 aa).

Residues 1–24 (MKDISRRRFVLGTGATVAAATLAG) form the signal peptide. Cysteine 25 carries the N-acetylcysteine modification. Cysteine 25 carries S-archaeol cysteine lipidation. Positions 26–38 (NGNGNGNGNGNGN) are enriched in gly residues. The interval 26-48 (NGNGNGNGNGNGNGEPDTPEGRA) is disordered. A Plastocyanin-like domain is found at 48-163 (ADQFLTDNDA…QGMYGAVIVE (116 aa)). Cu cation-binding residues include histidine 110, cysteine 148, histidine 151, and methionine 156.

It is found in the cell membrane. Functionally, electron donor. Binds one copper ion. The protein is Halocyanin (hcy) of Natronomonas pharaonis (Natronobacterium pharaonis).